Consider the following 38-residue polypeptide: Alpha-conotoxin PeIA (38 aa).

Positions 1 to 21 (FDGRNAAANDKASDLVALTVR) are excised as a propeptide. 2 disulfide bridges follow: Cys23/Cys29 and Cys24/Cys37. Positions 25-27 (SHP) are ser-Xaa-Pro motif, crucial for potent interaction with nAChR. Cysteine amide is present on Cys37.

The protein belongs to the conotoxin A superfamily. In terms of processing, the hydroxylation at position Pro-27 is critical, since an hydroxylation at this position decreases potency of the toxin to inhibit both alpha-3-beta-2 (1300-fold) and alpha-6/alpha-3-beta-2-beta-3 (130-fold) nAChRs. Post-translationally, a non-modified residue at position Pro-34 is critical, since a hydroxylation at this position decreases potency of the toxin to inhibit alpha-3-beta-2 (1-45-fold) and increases potency to inhibit alpha-6/alpha-3-beta-2-beta-3 (1.77-fold) nAChRs. Expressed by the venom duct.

It is found in the secreted. Alpha-conotoxins act on postsynaptic membranes, they bind to the nicotinic acetylcholine receptors (nAChR) and thus inhibit them. This synthetic peptide potently and reversibly blocks alpha-9-alpha-10/CHRNA9-CHRNA10 nAChR (IC(50)=6.9-54.9 nM), alpha-3-beta-2/CHRNA3-CHRNB2 (IC(50)=9.7-97.5 nM) and alpha-6/alpha-3-beta-2-beta-3 (CHRNA6/CHRNA3-CHRNB2-CHRNB3) (IC(50)=11.1-17.2 nM). It also inhibits alpha-6/alpha-3-beta-4 (CHRNA6/CHRNA3-CHRNB4) nAChR with a higher potency on human (IC(50)=6.75 nM) than on rat receptors (IC(50)=130-147 nM). Also shows a weak ability to inhibit alpha-3-beta-4/CHRNA3-CHRNB4 (IC(50)=480-1500 nM). This synthetic toxin also inhibits N-type calcium channels (Ca2.2/CACNA1B) (IC(50)=1.1 nM) via the activation of the G protein-coupled GABA(B) receptor in DRG neurons. Also exhibits inhibition of D.melanogaster alpha-7/CHRNA7 nAChRs. This chain is Alpha-conotoxin PeIA, found in Conus pergrandis (Grand cone).